The sequence spans 87 residues: Cytochrome c5 (87 aa).

The heme site is built by cysteine 19, cysteine 22, histidine 23, and methionine 63. Cysteine 69 and cysteine 72 form a disulfide bridge.

It belongs to the cytochrome c family. In terms of assembly, homodimer. In terms of processing, binds 1 heme group per subunit.

It is unreactive with cytochrome c reductase or oxidase but seems to function as an intermediate in nitrate respiration of facultative anaerobic pseudmonads. In Ectopseudomonas mendocina (Pseudomonas mendocina), this protein is Cytochrome c5.